The sequence spans 624 residues: MGDPLLPGSTGLGSGPAAAATGGSGTTGTGLGSGGTSGAERPPSPARLTHTSEKHPKVTLTELNMLRRHRELCDVVLNVGGRKIFAHRVILSACSSYFCAMFTGELEESRQTEVTIRDIDENAMELLIDFCYTAHIIVEESNVQTLLPAACLLQLVEIQDICCEFLKRQLDPTNCLGIRAFADTHSCRELLRIADKFTQHNFQEVMESEEFLLLPVGQLVDIICSDELNVRSEEQVFNAVMSWLKYNVAERRQHLAQVLQHVRLPLLSPKFLVGTVGSDLLVRSDEACRDLVDEAKNYLLLPQERPLMQGPRTRPRKPTRRGEVLFAVGGWCSGDAIASVERFDPQTNDWKMVAPMSKRRCGVGVAVLNDLLYAVGGHDGQSYLNSIERYDPQTNQWSCDVAPTTSCRTSVGVAVLDGFLYAVGGQDGVQCLNHVERYDPKENKWSKVAPMTTRRLGVAVAVLSGHLYAIGGSDGQCPLNTVERYDPRQNKWVAVNPMSTRRKHLGCAVFNNYIYAVGGRDDCMELSSAERYNPLTNTWSPIVAMTSRRSGVGLAVVNGQLYAVGGFDGSAYLKTIEVYDPETNQWRLCGCMNYRRLGGGVGVMRAPQTENYMWCDNSFLLHDR.

The span at 1-21 shows a compositional bias: low complexity; sequence MGDPLLPGSTGLGSGPAAAAT. The interval 1 to 55 is disordered; sequence MGDPLLPGSTGLGSGPAAAATGGSGTTGTGLGSGGTSGAERPPSPARLTHTSEKH. Positions 22–37 are enriched in gly residues; the sequence is GGSGTTGTGLGSGGTS. One can recognise a BTB domain in the interval 73–140; sequence CDVVLNVGGR…CYTAHIIVEE (68 aa). Residues 175–277 enclose the BACK domain; that stretch reads CLGIRAFADT…SPKFLVGTVG (103 aa). 6 Kelch repeats span residues 324–370, 372–418, 419–465, 467–512, 514–559, and 560–606; these read VLFA…VLND, LYAV…VLDG, FLYA…VLSG, LYAI…VFNN, IYAV…VVNG, and QLYA…VMRA.

It participates in protein modification; protein ubiquitination. Its function is as follows. Probable substrate-specific adapter of an E3 ubiquitin-protein ligase complex which mediates the ubiquitination and subsequent proteasomal degradation of target proteins. May have a role in synapse differentiation and growth. This is Kelch-like protein diablo from Drosophila virilis (Fruit fly).